The primary structure comprises 355 residues: UDP-N-acetylglucosamine--N-acetylmuramyl-(pentapeptide) pyrophosphoryl-undecaprenol N-acetylglucosamine transferase (355 aa).

Residues 15 to 17 (TGG), asparagine 127, arginine 163, serine 191, isoleucine 244, 263 to 268 (ALTVSE), and glutamine 288 each bind UDP-N-acetyl-alpha-D-glucosamine.

It belongs to the glycosyltransferase 28 family. MurG subfamily.

The protein localises to the cell inner membrane. It catalyses the reaction di-trans,octa-cis-undecaprenyl diphospho-N-acetyl-alpha-D-muramoyl-L-alanyl-D-glutamyl-meso-2,6-diaminopimeloyl-D-alanyl-D-alanine + UDP-N-acetyl-alpha-D-glucosamine = di-trans,octa-cis-undecaprenyl diphospho-[N-acetyl-alpha-D-glucosaminyl-(1-&gt;4)]-N-acetyl-alpha-D-muramoyl-L-alanyl-D-glutamyl-meso-2,6-diaminopimeloyl-D-alanyl-D-alanine + UDP + H(+). The protein operates within cell wall biogenesis; peptidoglycan biosynthesis. In terms of biological role, cell wall formation. Catalyzes the transfer of a GlcNAc subunit on undecaprenyl-pyrophosphoryl-MurNAc-pentapeptide (lipid intermediate I) to form undecaprenyl-pyrophosphoryl-MurNAc-(pentapeptide)GlcNAc (lipid intermediate II). The protein is UDP-N-acetylglucosamine--N-acetylmuramyl-(pentapeptide) pyrophosphoryl-undecaprenol N-acetylglucosamine transferase of Salmonella typhi.